A 289-amino-acid chain; its full sequence is Protease HtpX homolog (289 aa).

A run of 2 helical transmembrane segments spans residues 8 to 28 (LALL…VIGG) and 29 to 49 (SSGL…SWYQ). Position 132 (His132) interacts with Zn(2+). Residue Glu133 is part of the active site. His136 provides a ligand contact to Zn(2+). The next 2 membrane-spanning stretches (helical) occupy residues 151-171 (VAGA…FGGI) and 183-203 (LGVL…QLAI). Position 208 (Glu208) interacts with Zn(2+).

This sequence belongs to the peptidase M48B family. Zn(2+) serves as cofactor.

It localises to the cell inner membrane. This Trichormus variabilis (strain ATCC 29413 / PCC 7937) (Anabaena variabilis) protein is Protease HtpX homolog.